The following is a 200-amino-acid chain: Ribonuclease T2 (200 aa).

Cysteine 17 and cysteine 22 form a disulfide bridge. Histidine 32 is a catalytic residue. A disulfide bond links cysteine 42 and cysteine 89. N-linked (GlcNAc...) asparagine glycosylation is found at asparagine 43 and asparagine 73. Residues glutamate 82 and histidine 86 contribute to the active site. N-linked (GlcNAc...) asparagine glycosylation is present at asparagine 116. 2 cysteine pairs are disulfide-bonded: cysteine 152–cysteine 188 and cysteine 170–cysteine 180.

This sequence belongs to the RNase T2 family.

It is found in the secreted. The protein resides in the lysosome lumen. The protein localises to the endoplasmic reticulum lumen. Its subcellular location is the mitochondrion intermembrane space. The enzyme catalyses a ribonucleotidyl-ribonucleotide-RNA + H2O = a 3'-end 3'-phospho-ribonucleotide-RNA + a 5'-end dephospho-ribonucleoside-RNA + H(+). It catalyses the reaction an adenylyl-uridine-RNA = a 3'-end 2',3'-cyclophospho-AMP-RNA + a 5'-end dephospho-uridine-RNA. It carries out the reaction a guanylyl-uridine-RNA = a 3'-end 2',3'-cyclophospho-GMP-RNA + a 5'-end dephospho-uridine-RNA. With respect to regulation, inhibited by Zn(2+) and Cu(2+). Ribonuclease that plays an essential role in innate immune response by recognizing and degrading RNAs from microbial pathogens that are subsequently sensed by TLR8. Cleaves preferentially single-stranded RNA molecules between purine and uridine residues, which critically contributes to the supply of catabolic uridine and the generation of purine-2',3'-cyclophosphate-terminated oligoribonucleotides. In turn, RNase T2 degradation products promote the RNA-dependent activation of TLR8. In plasmacytoid dendritic cells, it cooperates with PLD3 or PLD4 5'-&gt;3' exonucleases to process RNA fragments and release 2',3'-cyclic guanosine monophosphate (2',3'-cGMP), a potent stimulatory ligand for TLR7. Also plays a key role in degradation of mitochondrial RNA and processing of non-coding RNA imported from the cytosol into mitochondria. Participates as well in degradation of mitochondrion-associated cytosolic rRNAs. The polypeptide is Ribonuclease T2 (RNASET2) (Sus scrofa (Pig)).